The sequence spans 76 residues: UPF0154 protein LCA_1273 (76 aa).

Residues 3–23 (IGIGVLIFVIGALLGAVAGFF) form a helical membrane-spanning segment. The disordered stretch occupies residues 55–76 (PSEKKLNQMMSSMKAQQKRSKK).

It belongs to the UPF0154 family.

It is found in the cell membrane. The polypeptide is UPF0154 protein LCA_1273 (Latilactobacillus sakei subsp. sakei (strain 23K) (Lactobacillus sakei subsp. sakei)).